Consider the following 205-residue polypeptide: Dephospho-CoA kinase (205 aa).

The region spanning 7-205 (IIGITGRIAS…QEIINYERFE (199 aa)) is the DPCK domain. ATP is bound at residue 15-20 (ASGKDA).

The protein belongs to the CoaE family.

The protein localises to the cytoplasm. The enzyme catalyses 3'-dephospho-CoA + ATP = ADP + CoA + H(+). Its pathway is cofactor biosynthesis; coenzyme A biosynthesis; CoA from (R)-pantothenate: step 5/5. Catalyzes the phosphorylation of the 3'-hydroxyl group of dephosphocoenzyme A to form coenzyme A. The chain is Dephospho-CoA kinase from Borrelia garinii subsp. bavariensis (strain ATCC BAA-2496 / DSM 23469 / PBi) (Borreliella bavariensis).